A 493-amino-acid polypeptide reads, in one-letter code: Phospholipid transfer protein (493 aa).

The signal sequence occupies residues M1–A17. N-linked (GlcNAc...) asparagine glycans are attached at residues N64, N91, N94, N117, and N143. A disulfide bond links C146 and C185. 2 N-linked (GlcNAc...) asparagine glycosylation sites follow: N245 and N398.

This sequence belongs to the BPI/LBP/Plunc superfamily. BPI/LBP family. Post-translationally, glycosylation is necessary for secretion and its phospholipid transfer activity. Highest level expression in the lung, brain and heart with relatively low levels in the liver, skeletal muscle and testis and very low levels found in the spleen and kidney.

It localises to the secreted. The protein resides in the nucleus. The enzyme catalyses a 1,2-diacyl-sn-glycero-3-phosphocholine(in) = a 1,2-diacyl-sn-glycero-3-phosphocholine(out). The catalysed reaction is a 1,2-diacyl-sn-glycero-3-phosphoethanolamine(in) = a 1,2-diacyl-sn-glycero-3-phosphoethanolamine(out). It carries out the reaction a 1,2-diacyl-sn-glycerol(in) = a 1,2-diacyl-sn-glycerol(out). It catalyses the reaction a 1,2-diacyl-sn-glycero-3-phosphate(in) = a 1,2-diacyl-sn-glycero-3-phosphate(out). The enzyme catalyses a sphingomyelin(in) = a sphingomyelin(out). The catalysed reaction is a 1,2-diacyl-sn-glycero-3-phospho-(1'-sn-glycerol)(in) = a 1,2-diacyl-sn-glycero-3-phospho-(1'-sn-glycerol)(out). It carries out the reaction a 1,2-diacyl-sn-glycero-3-phospho-(1D-myo-inositol)(in) = a 1,2-diacyl-sn-glycero-3-phospho-(1D-myo-inositol)(out). It catalyses the reaction 1-hexadecanoyl-2-(5Z,8Z,11Z,14Z-eicosatetraenoyl)-sn-glycero-3-phosphoethanolamine(in) = 1-hexadecanoyl-2-(5Z,8Z,11Z,14Z-eicosatetraenoyl)-sn-glycero-3-phosphoethanolamine(out). The enzyme catalyses N-(hexadecanoyl)-sphing-4-enine-1-phosphocholine(in) = N-(hexadecanoyl)-sphing-4-enine-1-phosphocholine(out). The catalysed reaction is 1,2-dihexadecanoyl-sn-glycero-3-phosphocholine(in) = 1,2-dihexadecanoyl-sn-glycero-3-phosphocholine(out). Mediates the transfer of phospholipids and free cholesterol from triglyceride-rich lipoproteins (low density lipoproteins or LDL and very low density lipoproteins or VLDL) into high-density lipoproteins (HDL) as well as the exchange of phospholipids between triglyceride-rich lipoproteins themselves. Facilitates the transfer of a spectrum of different lipid molecules, including sphingomyelin, phosphatidylcholine, phosphatidylinositol, phosphatidylglycerol, and phosphatidyl ethanolamine. Plays an important role in HDL remodeling which involves modulating the size and composition of HDL. Also plays a key role in the uptake of cholesterol from peripheral cells and tissues that is subsequently transported to the liver for degradation and excretion. Two distinct forms of PLTP exist in plasma: an active form that can transfer phosphatidylcholine from phospholipid vesicles to HDL, and an inactive form that lacks this capability. This Mus musculus (Mouse) protein is Phospholipid transfer protein (Pltp).